Reading from the N-terminus, the 396-residue chain is 1-deoxy-D-xylulose 5-phosphate reductoisomerase (396 aa).

Residues Thr-13, Gly-14, Ser-15, Ile-16, and Asn-127 each contribute to the NADPH site. 1-deoxy-D-xylulose 5-phosphate is bound at residue Lys-128. An NADPH-binding site is contributed by Glu-129. Residue Asp-153 participates in Mn(2+) binding. Residues Ser-154, Glu-155, Ser-184, and His-207 each contribute to the 1-deoxy-D-xylulose 5-phosphate site. Mn(2+) is bound at residue Glu-155. NADPH is bound at residue Gly-213. Ser-220, Asn-225, Lys-226, and Glu-229 together coordinate 1-deoxy-D-xylulose 5-phosphate. Glu-229 lines the Mn(2+) pocket.

This sequence belongs to the DXR family. Requires Mg(2+) as cofactor. Mn(2+) is required as a cofactor.

It carries out the reaction 2-C-methyl-D-erythritol 4-phosphate + NADP(+) = 1-deoxy-D-xylulose 5-phosphate + NADPH + H(+). The protein operates within isoprenoid biosynthesis; isopentenyl diphosphate biosynthesis via DXP pathway; isopentenyl diphosphate from 1-deoxy-D-xylulose 5-phosphate: step 1/6. Catalyzes the NADPH-dependent rearrangement and reduction of 1-deoxy-D-xylulose-5-phosphate (DXP) to 2-C-methyl-D-erythritol 4-phosphate (MEP). The sequence is that of 1-deoxy-D-xylulose 5-phosphate reductoisomerase from Pseudomonas putida (strain W619).